The following is a 206-amino-acid chain: Small ribosomal subunit protein uS4 (206 aa).

The S4 RNA-binding domain maps to 96–156; it reads SRLDNVVYRM…EKSRNQSRIA (61 aa).

The protein belongs to the universal ribosomal protein uS4 family. As to quaternary structure, part of the 30S ribosomal subunit. Contacts protein S5. The interaction surface between S4 and S5 is involved in control of translational fidelity.

In terms of biological role, one of the primary rRNA binding proteins, it binds directly to 16S rRNA where it nucleates assembly of the body of the 30S subunit. Functionally, with S5 and S12 plays an important role in translational accuracy. The chain is Small ribosomal subunit protein uS4 from Hydrogenovibrio crunogenus (strain DSM 25203 / XCL-2) (Thiomicrospira crunogena).